Reading from the N-terminus, the 176-residue chain is ATP synthase subunit delta (176 aa).

The protein belongs to the ATPase delta chain family. As to quaternary structure, F-type ATPases have 2 components, F(1) - the catalytic core - and F(0) - the membrane proton channel. F(1) has five subunits: alpha(3), beta(3), gamma(1), delta(1), epsilon(1). F(0) has three main subunits: a(1), b(2) and c(10-14). The alpha and beta chains form an alternating ring which encloses part of the gamma chain. F(1) is attached to F(0) by a central stalk formed by the gamma and epsilon chains, while a peripheral stalk is formed by the delta and b chains.

It localises to the cell inner membrane. Functionally, f(1)F(0) ATP synthase produces ATP from ADP in the presence of a proton or sodium gradient. F-type ATPases consist of two structural domains, F(1) containing the extramembraneous catalytic core and F(0) containing the membrane proton channel, linked together by a central stalk and a peripheral stalk. During catalysis, ATP synthesis in the catalytic domain of F(1) is coupled via a rotary mechanism of the central stalk subunits to proton translocation. This protein is part of the stalk that links CF(0) to CF(1). It either transmits conformational changes from CF(0) to CF(1) or is implicated in proton conduction. This Actinobacillus succinogenes (strain ATCC 55618 / DSM 22257 / CCUG 43843 / 130Z) protein is ATP synthase subunit delta.